Reading from the N-terminus, the 1196-residue chain is NACHT, LRR and PYD domains-containing protein 1b allele 5 (1196 aa).

Residues 1–22 (MEESPPKQKSNTKVTQHEGQQD) are disordered. One can recognise an NACHT domain in the interval 126-435 (QLVIIEGAAG…EFFAAISCIL (310 aa)). 132–139 (GAAGIGKS) contributes to the ATP binding site. 2 LRR repeats span residues 627–647 (NLEG…QSLC) and 684–704 (SLTE…RMLC). The tract at residues 789-922 (FWGPTGPVAT…GYTVLKNPSF (134 aa)) is ZU5. Residues 789–1072 (FWGPTGPVAT…KFDHLCDQEF (284 aa)) form the FIIND domain. The segment at 923–1072 (SPMGVVLRII…KFDHLCDQEF (150 aa)) is UPA. A CARD domain is found at 1106–1189 (HFMDQHREQL…HLVMDLFEKS (84 aa)).

The protein belongs to the NLRP family. In terms of assembly, interacts with DPP9; leading to inhibit activation of the inflammasome. DPP9 acts via formation of a ternary complex, composed of a DPP9 homodimer, one full-length Nlrp1b protein, and one cleaved C-terminus of Nlrp1b (NACHT, LRR and PYD domains-containing protein 1b, C-terminus). Interacts with DPP8; leading to inhibit activation of the inflammasome, probably via formation of a ternary complex with DPP8. Interacts (via LRR repeats) with BCL2 and BCL2L1 (via the loop between motifs BH4 and BH3). Interacts with NOD2; this interaction may increase IL1B release. Interacts with EIF2AK2/PKR; this interaction requires EIF2AK2 activity, is accompanied by EIF2AK2 autophosphorylation and promotes inflammasome assembly in response to B.anthracis lethal toxin. Interacts with MEFV; this interaction targets Nlrp1b to degradation by autophagy, hence preventing excessive IL1B- and IL18-mediated inflammation. Interacts with the C-terminal part of Nlrp1b (NACHT, LRR and PYD domains-containing protein 1b, C-terminus) in absence of pathogens and other damage-associated signals. As to quaternary structure, interacts with the N-terminal part of Nlrp1b (NACHT, LRR and PYD domains-containing protein 1b, N-terminus) in absence of pathogens and other damage-associated signals. Homomultimer; forms the Nlrp1b inflammasome polymeric complex, a filament composed of homopolymers of this form in response to pathogens and other damage-associated signals. The Nlrp1b inflammasome polymeric complex directly recruits pro-caspase-1 (proCASP1) independently of PYCARD/ASC. Interacts (via CARD domain) with CASP1 (via CARD domain); leading to CASP1 activation. Autocatalytically cleaved. Autocatalytic cleavage in FIIND region occurs constitutively, prior to activation signals, and is required for inflammasome activity (IL1B release), possibly by facilitating CASP1 binding. Both N- and C-terminal parts remain associated non-covalently. Post-translationally, ubiquitinated by the N-end rule pathway in response to pathogens and other damage-associated signals, leading to its degradation by the proteasome and subsequent release of the cleaved C-terminal part of the protein (NACHT, LRR and PYD domains-containing protein 1b, C-terminus), which polymerizes and forms the Nlrp1b inflammasome. In terms of processing, (Microbial infection) Cleavage by B.anthracis lethal toxin (LT) endopeptidase promotes ubiquitination and degradation of the N-terminal part, releasing the cleaved C-terminal part of the protein (NACHT, LRR and PYD domains-containing protein 1b, C-terminus), which polymerizes and forms the Nlrp1b inflammasome. In terms of tissue distribution, expressed in macrophages.

It is found in the cytoplasm. It localises to the cytosol. Its subcellular location is the inflammasome. Activated by cleavage by B.anthracis lethal toxin (LT) endopeptidase. Cleavage by LT promotes ubiquitination and degradation of the N-terminal part, releasing the cleaved C-terminal part of the protein (NACHT, LRR and PYD domains-containing protein 1b, C-terminus), which polymerizes and forms the Nlrp1b inflammasome. Nlrp1b inflammasome is inhibited by DPP8 and DPP9, which sequester the C-terminal fragment of Nlrp1b (NACHT, LRR and PYD domains-containing protein 1b, C-terminus) in a ternary complex, thereby preventing Nlrp1b oligomerization and activation. Nlrp1b inflammasome is activated by Val-boroPro (Talabostat, PT-100), an inhibitor of dipeptidyl peptidases DPP8 and DPP9. Val-boroPro relieves inhibition of DPP8 and/or DPP9 by promoting disruption of the ternary complex, releasing its C-terminal part from autoinhibition. Activated by metabolic inhibitors, such as 2-deoxy-D-glucose and sodium azide. Not activated by muramyl dipeptide, nor by full-length bacterial peptidoglycan. Functionally, acts as the sensor component of the Nlrp1b inflammasome, which mediates inflammasome activation in response to various pathogen-associated signals, leading to subsequent pyroptosis. Inflammasomes are supramolecular complexes that assemble in the cytosol in response to pathogens and other damage-associated signals and play critical roles in innate immunity and inflammation. Acts as a recognition receptor (PRR): recognizes specific pathogens and other damage-associated signals, such as B.anthracis lethal toxin (LT) or Val-boroPro inhibitor, and mediates the formation of the inflammasome polymeric complex. In response to pathogen-associated signals, the N-terminal part of Nlrp1b is degraded by the proteasome, releasing the cleaved C-terminal part of the protein (NACHT, LRR and PYD domains-containing protein 1b, C-terminus), which polymerizes to initiate the formation of the inflammasome complex: the inflammasome directly recruits pro-caspase-1 (proCASP1) independently of PYCARD/ASC and promotes caspase-1 (CASP1) activation, which subsequently cleaves and activates inflammatory cytokines IL1B and IL18 and gasdermin-D (GSDMD), leading to pyroptosis. In the absence of GSDMD expression, the Nlrp1b inflammasome is able to recruit and activate CASP8, leading to activation of gasdermin-E (GSDME). Activation of Nlrp1b inflammasome is also required for HMGB1 secretion; the active cytokines and HMGB1 stimulate inflammatory responses. Primary mediator of macrophage susceptibility to B.anthracis LT: in response to B.anthracis infection, macrophages and dendritic cells release IL1B and undergo pyroptosis. This early inflammatory response to the toxin increases resistance to infection by B.anthracis spores. In terms of biological role, constitutes the precursor of the Nlrp1b inflammasome, which mediates autoproteolytic processing within the FIIND domain to generate the N-terminal and C-terminal parts, which are associated non-covalently in absence of pathogens and other damage-associated signals. Regulatory part that prevents formation of the Nlrp1b inflammasome: in absence of pathogens and other damage-associated signals, interacts with the C-terminal part of Nlrp1b (NACHT, LRR and PYD domains-containing protein 1b, C-terminus), preventing activation of the Nlrp1b inflammasome. In response to pathogen-associated signals, this part is ubiquitinated by the N-end rule pathway and degraded by the proteasome, releasing the cleaved C-terminal part of the protein, which polymerizes and forms the Nlrp1b inflammasome. Its function is as follows. Constitutes the active part of the Nlrp1b inflammasome. In absence of pathogens and other damage-associated signals, interacts with the N-terminal part of Nlrp1b (NACHT, LRR and PYD domains-containing protein 1b, N-terminus), preventing activation of the Nlrp1b inflammasome. In response to pathogen-associated signals, the N-terminal part of Nlrp1b is degraded by the proteasome, releasing this form, which polymerizes to form the Nlrp1b inflammasome complex: the Nlrp1b inflammasome complex then directly recruits pro-caspase-1 (proCASP1) and promotes caspase-1 (CASP1) activation, leading to gasdermin-D (GSDMD) cleavage and subsequent pyroptosis. In Mus musculus (Mouse), this protein is NACHT, LRR and PYD domains-containing protein 1b allele 5 (Nlrp1b).